Here is a 72-residue protein sequence, read N- to C-terminus: UPF0270 protein YheU (72 aa).

Belongs to the UPF0270 family.

The polypeptide is UPF0270 protein YheU (Salmonella choleraesuis (strain SC-B67)).